The following is a 485-amino-acid chain: Iroquois-class homeodomain protein IRX-4 (485 aa).

A DNA-binding region (homeobox; TALE-type) is located at residues glycine 142–asparagine 203. Residues threonine 206–arginine 313 are disordered. Positions glutamate 221–glutamine 232 are enriched in acidic residues. Residues aspartate 234–glutamate 253 show a composition bias toward basic and acidic residues. Residues leucine 254 to glutamate 269 show a composition bias toward acidic residues. Positions histidine 282–alanine 294 are enriched in pro residues.

Belongs to the TALE/IRO homeobox family. In terms of tissue distribution, ventricles of the heart, developing feather buds, retina, hindbrain.

It is found in the nucleus. Functionally, regulates the chamber-specific expression of myosin isoforms by activating the expression of the ventricle myosin heavy chain-1 (Vmhc1) and suppressing the expression of the atrial myosin heavy chain-1 (Amhc1) in the ventricles. May play a critical role in establishing chamber-specific gene expression in the developing heart. This chain is Iroquois-class homeodomain protein IRX-4 (IRX4), found in Gallus gallus (Chicken).